A 192-amino-acid chain; its full sequence is Pyridoxal 5'-phosphate synthase subunit PdxT (192 aa).

46-48 (GES) is a binding site for L-glutamine. Cys76 (nucleophile) is an active-site residue. L-glutamine-binding positions include Arg103 and 131–132 (IR). Residues His167 and Glu169 each act as charge relay system in the active site.

It belongs to the glutaminase PdxT/SNO family. As to quaternary structure, in the presence of PdxS, forms a dodecamer of heterodimers. Only shows activity in the heterodimer.

It carries out the reaction aldehydo-D-ribose 5-phosphate + D-glyceraldehyde 3-phosphate + L-glutamine = pyridoxal 5'-phosphate + L-glutamate + phosphate + 3 H2O + H(+). The catalysed reaction is L-glutamine + H2O = L-glutamate + NH4(+). The protein operates within cofactor biosynthesis; pyridoxal 5'-phosphate biosynthesis. In terms of biological role, catalyzes the hydrolysis of glutamine to glutamate and ammonia as part of the biosynthesis of pyridoxal 5'-phosphate. The resulting ammonia molecule is channeled to the active site of PdxS. In Koribacter versatilis (strain Ellin345), this protein is Pyridoxal 5'-phosphate synthase subunit PdxT.